The sequence spans 684 residues: G-protein-signaling modulator 2 (684 aa).

The important for interaction with NUMA1; INSC and FRMPD1 stretch occupies residues 22–357 (ASCLELALEG…HLEISREVGD (336 aa)). TPR repeat units lie at residues 24-57 (CLEL…GTED), 62-95 (SAIY…ARTI), 102-135 (AKAS…SREL), 142-184 (ARAL…AVDF), 202-235 (GRAF…AKEF), 242-275 (RRAY…ARQL), 282-315 (AQSC…AQEL), and 322-355 (GRAC…SREV). Serine 132 carries the post-translational modification Phosphoserine; by PKG. Position 352 is a phosphoserine; by PKG (serine 352). Residues serine 408 and serine 483 each carry the phosphoserine modification. Phosphothreonine is present on threonine 486. The GoLoco 1 domain maps to 489 to 511 (DEGFFDLLSRFQSNRMDDQRCCL). At serine 501 the chain carries Phosphoserine; by PKC. Serine 541 and serine 565 each carry phosphoserine. GoLoco domains follow at residues 544 to 566 (TDEF…RASF), 594 to 616 (DEDF…RCAP), and 628 to 650 (DEDF…RVLL). Serine 607 is modified (phosphoserine; by PKG). The GDP site is built by arginine 608, arginine 613, arginine 642, and arginine 647.

This sequence belongs to the GPSM family. In terms of assembly, interacts with the dynein-dynactin complex; this interaction is inhibited in a PLK1-dependent manner. Part of a spindle orientation complex at least composed of GNAI1, GPSM2 and NUMA1. Interacts with LLGL2. Interacts (via TPR repeat region) with INSC/inscuteable. Interacts (via TPR repeat region) with NUMA1 (via C-terminus); this interaction is direct, inhibited in a PLK1-dependent manner, prevents the binding of NUMA1 with SPAG5 and promotes spindle pole organization. INSC and NUMA1 compete for the same binding site, but INSC has higher affinity and can displace NUMA1 (in vitro). Interacts with GNAI2. Interacts (via GoLoco domains) with the GDP-bound form of GNAI1 and GNAI3; has much lower affinity for the GTP-bound form. Interaction with GDP-bound GNAI3 strongly enhances the affinity for NUMA1. Interacts (via TPR repeat region) with FRMPD1. INSC and FRMPD1 compete for the same binding site, but INSC has higher affinity and can displace FRMPD1 (in vitro). Interacts (via TPR repeat region) with FRMPD4. Identified in a complex with INSC and F2RL2/Par3. Interacts with TASOR. Ubiquitously expressed.

Its subcellular location is the cytoplasm. It is found in the cell cortex. It localises to the cytoskeleton. The protein resides in the spindle pole. The protein localises to the lateral cell membrane. Plays an important role in mitotic spindle pole organization via its interaction with NUMA1. Required for cortical dynein-dynactin complex recruitment during metaphase. Plays a role in metaphase spindle orientation. Also plays an important role in asymmetric cell divisions. Has guanine nucleotide dissociation inhibitor (GDI) activity towards G(i) alpha proteins, such as GNAI1 and GNAI3, and thereby regulates their activity. This chain is G-protein-signaling modulator 2 (GPSM2), found in Homo sapiens (Human).